Consider the following 28-residue polypeptide: U1-poneritoxin-Da4a (28 aa).

Position 28 is an alanine amide (Ala28).

As to expression, expressed by the venom gland.

It is found in the secreted. Shows a broad spectrum of activity against both Gram-positive and Gram-negative bacteria. Also has antimicrobial activity against S.cerevisiae. Has insecticidal and non-hemolytic activity. The sequence is that of U1-poneritoxin-Da4a from Dinoponera australis (Giant neotropical hunting ant).